Here is a 247-residue protein sequence, read N- to C-terminus: Adenylate kinase (247 aa).

42 to 47 contributes to the ATP binding site; sequence GAGKGT. The tract at residues 62–91 is NMP; that stretch reads ATGDMLRAQVTAKTELGVQAKKIMDQGGLV. AMP is bound by residues threonine 63, arginine 68, 89–91, 118–121, and glutamine 125; these read GLV and GFPR. The interval 159 to 196 is LID; the sequence is GRLVHPASGRSYHKLFNPPKKEMTDDQTGEPLVQRSDD. Residues arginine 160 and 169–170 each bind ATP; that span reads SY. The disordered stretch occupies residues 169–191; it reads SYHKLFNPPKKEMTDDQTGEPLV. AMP-binding residues include arginine 193 and arginine 204. Glutamine 232 contacts ATP.

The protein belongs to the adenylate kinase family. AK2 subfamily. Monomer.

The protein localises to the cytoplasm. It is found in the cytosol. The protein resides in the mitochondrion intermembrane space. The enzyme catalyses AMP + ATP = 2 ADP. Catalyzes the reversible transfer of the terminal phosphate group between ATP and AMP. Plays an important role in cellular energy homeostasis and in adenine nucleotide metabolism. Adenylate kinase activity is critical for regulation of the phosphate utilization and the AMP de novo biosynthesis pathways. The chain is Adenylate kinase from Meyerozyma guilliermondii (strain ATCC 6260 / CBS 566 / DSM 6381 / JCM 1539 / NBRC 10279 / NRRL Y-324) (Yeast).